The following is a 362-amino-acid chain: 3-isopropylmalate dehydrogenase (362 aa).

Position 78-91 (78-91 (GPKWEHLAPNDQPE)) interacts with NAD(+). Substrate is bound by residues Arg-99, Arg-109, Arg-138, and Asp-227. Residues Asp-227, Asp-251, and Asp-255 each coordinate Mg(2+). 285 to 297 (GSAPDIAGKNIAN) lines the NAD(+) pocket.

This sequence belongs to the isocitrate and isopropylmalate dehydrogenases family. LeuB type 1 subfamily. Homodimer. It depends on Mg(2+) as a cofactor. Requires Mn(2+) as cofactor.

Its subcellular location is the cytoplasm. It carries out the reaction (2R,3S)-3-isopropylmalate + NAD(+) = 4-methyl-2-oxopentanoate + CO2 + NADH. It functions in the pathway amino-acid biosynthesis; L-leucine biosynthesis; L-leucine from 3-methyl-2-oxobutanoate: step 3/4. Its function is as follows. Catalyzes the oxidation of 3-carboxy-2-hydroxy-4-methylpentanoate (3-isopropylmalate) to 3-carboxy-4-methyl-2-oxopentanoate. The product decarboxylates to 4-methyl-2 oxopentanoate. The protein is 3-isopropylmalate dehydrogenase of Photobacterium profundum (strain SS9).